The chain runs to 432 residues: DnaJ-like protein 1 (432 aa).

In terms of domain architecture, J spans Asp-4–Lys-73. The segment at Asn-117–Ala-187 is disordered.

This sequence belongs to the DnaJ family. As to quaternary structure, interacts with SLN1.

It localises to the cytoplasm. Its function is as follows. Required for peroxisomal protein import which maintains the function of peroxisomes. The protein is DnaJ-like protein 1 (DJP1) of Saccharomyces cerevisiae (strain ATCC 204508 / S288c) (Baker's yeast).